The chain runs to 229 residues: Urease accessory protein UreF (229 aa).

The protein belongs to the UreF family. As to quaternary structure, ureD, UreF and UreG form a complex that acts as a GTP-hydrolysis-dependent molecular chaperone, activating the urease apoprotein by helping to assemble the nickel containing metallocenter of UreC. The UreE protein probably delivers the nickel.

The protein resides in the cytoplasm. Required for maturation of urease via the functional incorporation of the urease nickel metallocenter. The chain is Urease accessory protein UreF from Staphylococcus epidermidis (strain ATCC 12228 / FDA PCI 1200).